Consider the following 425-residue polypeptide: Glutamyl-tRNA reductase (425 aa).

Substrate is bound by residues 49-52 (TCNR), Ser-109, 114-116 (EGQ), and Gln-120. Cys-50 acts as the Nucleophile in catalysis. Position 189 to 194 (189 to 194 (GAGETG)) interacts with NADP(+).

This sequence belongs to the glutamyl-tRNA reductase family. As to quaternary structure, homodimer.

The enzyme catalyses (S)-4-amino-5-oxopentanoate + tRNA(Glu) + NADP(+) = L-glutamyl-tRNA(Glu) + NADPH + H(+). The protein operates within porphyrin-containing compound metabolism; protoporphyrin-IX biosynthesis; 5-aminolevulinate from L-glutamyl-tRNA(Glu): step 1/2. It participates in porphyrin-containing compound metabolism; chlorophyll biosynthesis. Catalyzes the NADPH-dependent reduction of glutamyl-tRNA(Glu) to glutamate 1-semialdehyde (GSA). This is Glutamyl-tRNA reductase from Chlorobium phaeobacteroides (strain DSM 266 / SMG 266 / 2430).